Here is a 248-residue protein sequence, read N- to C-terminus: Triosephosphate isomerase (248 aa).

9–11 (NWK) provides a ligand contact to substrate. The Electrophile role is filled by histidine 94. The active-site Proton acceptor is glutamate 166. Residues glycine 172, serine 212, and 233–234 (GG) each bind substrate.

Belongs to the triosephosphate isomerase family. In terms of assembly, homodimer.

It localises to the cytoplasm. It carries out the reaction D-glyceraldehyde 3-phosphate = dihydroxyacetone phosphate. Its pathway is carbohydrate biosynthesis; gluconeogenesis. It functions in the pathway carbohydrate degradation; glycolysis; D-glyceraldehyde 3-phosphate from glycerone phosphate: step 1/1. Functionally, involved in the gluconeogenesis. Catalyzes stereospecifically the conversion of dihydroxyacetone phosphate (DHAP) to D-glyceraldehyde-3-phosphate (G3P). This Alkaliphilus oremlandii (strain OhILAs) (Clostridium oremlandii (strain OhILAs)) protein is Triosephosphate isomerase.